The sequence spans 65 residues: Keratin-associated protein 23-1 (65 aa).

Interacts with hair keratins.

In the hair cortex, hair keratin intermediate filaments are embedded in an interfilamentous matrix, consisting of hair keratin-associated proteins (KRTAP), which are essential for the formation of a rigid and resistant hair shaft through their extensive disulfide bond cross-linking with abundant cysteine residues of hair keratins. The matrix proteins include the high-sulfur and high-glycine-tyrosine keratins. This Homo sapiens (Human) protein is Keratin-associated protein 23-1 (KRTAP23-1).